The sequence spans 89 residues: Small ribosomal subunit protein uS15 (89 aa).

Belongs to the universal ribosomal protein uS15 family. In terms of assembly, part of the 30S ribosomal subunit. Forms a bridge to the 50S subunit in the 70S ribosome, contacting the 23S rRNA.

One of the primary rRNA binding proteins, it binds directly to 16S rRNA where it helps nucleate assembly of the platform of the 30S subunit by binding and bridging several RNA helices of the 16S rRNA. Its function is as follows. Forms an intersubunit bridge (bridge B4) with the 23S rRNA of the 50S subunit in the ribosome. The polypeptide is Small ribosomal subunit protein uS15 (Buchnera aphidicola subsp. Cinara cedri (strain Cc)).